Here is a 445-residue protein sequence, read N- to C-terminus: Chromosome partition protein MukF (445 aa).

Positions 213–241 (LSETSATLKELQDTLQAAGDELQTQILDI) are leucine-zipper.

The protein belongs to the MukF family. Interacts, and probably forms a ternary complex, with MukE and MukB via its C-terminal region. The complex formation is stimulated by calcium or magnesium. It is required for an interaction between MukE and MukB.

It is found in the cytoplasm. The protein localises to the nucleoid. Its function is as follows. Involved in chromosome condensation, segregation and cell cycle progression. May participate in facilitating chromosome segregation by condensation DNA from both sides of a centrally located replisome during cell division. Not required for mini-F plasmid partitioning. Probably acts via its interaction with MukB and MukE. Overexpression results in anucleate cells. It has a calcium binding activity. This Vibrio atlanticus (strain LGP32) (Vibrio splendidus (strain Mel32)) protein is Chromosome partition protein MukF.